The chain runs to 328 residues: Phospholipid scramblase 1 (328 aa).

Residues Met1–Pro93 form a proline-rich domain (PRD) region. Positions Met1–Pro96 are disordered. Residues Met1–Lys297 lie on the Cytoplasmic side of the membrane. The short motif at Pro18 to Pro26 is the SH3-binding 1 element. The short motif at Pro22 to Tyr25 is the PPxY motif element. Residues Ala28 to Gln47 are compositionally biased toward low complexity. Pro residues predominate over residues Pro49–Pro64. The short motif at Pro56–Pro64 is the SH3-binding 2 element. Tyr83 carries the phosphotyrosine; by ABL modification. The SH3-binding 3 signature appears at Pro93–Pro101. Thr170 carries the post-translational modification Phosphothreonine; by PKC/PRKCD. Residues Cys193, Cys194, Cys197, and Cys198 are each lipidated (S-palmitoyl cysteine). Positions Ser269–Phe275 match the Nuclear localization signal motif. The helical transmembrane segment at Met298–Phe314 threads the bilayer. The Extracellular segment spans residues Glu315–Gln328.

Belongs to the phospholipid scramblase family. As to quaternary structure, forms homooligomers in the presence of calcium. Interacts with ABL. Interacts with RELT, RELL1 and RELL2. Interacts with OXSR1 in the presence of RELT. Interacts with OCLN, TOP2A and TOP2B. Interacts with TRPC1, TRPC4 and TRPC5. Interacts with ILDR1. Ca(2+) is required as a cofactor. It depends on Mg(2+) as a cofactor. Zn(2+) serves as cofactor. In terms of processing, phosphorylation at Thr-170 by PKC/PKCD increases its phospholipid scramblase activity during both cell stimulation and apoptosis. Phosphorylated by OXSR1 in the presence of RELT. Palmitoylation is required for its phospholipid scramblase activity. Palmitoylation regulates its localization to the cell membrane or the nucleus; trafficking to the cell membrane is dependent upon palmitoylation whereas in the absence of palmitoylation, localizes to the nucleus. Highly expressed in kidney, lung, liver and bone marrow, slightly in spleen, heart and macrophage.

The protein localises to the cell membrane. The protein resides in the nucleus. Its subcellular location is the cytoplasm. It is found in the perinuclear region. It carries out the reaction a 1,2-diacyl-sn-glycero-3-phosphocholine(in) = a 1,2-diacyl-sn-glycero-3-phosphocholine(out). The catalysed reaction is a 1,2-diacyl-sn-glycero-3-phosphoethanolamine(in) = a 1,2-diacyl-sn-glycero-3-phosphoethanolamine(out). It catalyses the reaction a 1,2-diacyl-sn-glycero-3-phospho-L-serine(in) = a 1,2-diacyl-sn-glycero-3-phospho-L-serine(out). Catalyzes calcium-induced ATP-independent rapid bidirectional and non-specific distribution of phospholipids (lipid scrambling or lipid flip-flop) between the inner and outer leaflet of the plasma membrane resulting in collapse of the phospholipid asymmetry which leads to phosphatidylserine externalization on the cell surface. Mediates calcium-dependent phosphatidylserine externalization and apoptosis in neurons via its association with TRPC5. Also exhibits magnesium-dependent nuclease activity against double-stranded DNA and RNA but not single-stranded DNA and can enhance DNA decatenation mediated by TOP2A. Negatively regulates FcR-mediated phagocytosis in differentiated macrophages. May contribute to cytokine-regulated cell proliferation and differentiation. The polypeptide is Phospholipid scramblase 1 (Plscr1) (Mus musculus (Mouse)).